The sequence spans 325 residues: Putative [LysW]-lysine/[LysW]-ornithine hydrolase (325 aa).

Histidine 66 lines the Zn(2+) pocket. Aspartate 68 is an active-site residue. Aspartate 90 is a binding site for Zn(2+). Catalysis depends on glutamate 117, which acts as the Proton acceptor. Glutamate 118, glutamate 139, and histidine 297 together coordinate Zn(2+).

The protein belongs to the peptidase M20A family. LysK subfamily. Requires Zn(2+) as cofactor. Co(2+) is required as a cofactor.

It localises to the cytoplasm. The catalysed reaction is [amino-group carrier protein]-C-terminal-gamma-(L-lysyl)-L-glutamate + H2O = [amino-group carrier protein]-C-terminal-L-glutamate + L-lysine. It carries out the reaction [amino-group carrier protein]-C-terminal-gamma-(L-ornithyl)-L-glutamate + H2O = [amino-group carrier protein]-C-terminal-L-glutamate + L-ornithine. The protein operates within amino-acid biosynthesis; L-lysine biosynthesis via AAA pathway; L-lysine from L-alpha-aminoadipate (Thermus route): step 5/5. It functions in the pathway amino-acid biosynthesis; L-arginine biosynthesis. Functionally, catalyzes the release of L-lysine from [LysW]-gamma-L-lysine and the release of L-ornithine from [LysW]-L-ornithine. This is Putative [LysW]-lysine/[LysW]-ornithine hydrolase from Pyrococcus horikoshii (strain ATCC 700860 / DSM 12428 / JCM 9974 / NBRC 100139 / OT-3).